A 245-amino-acid chain; its full sequence is Small ribosomal subunit protein uS3 (245 aa).

Residues 39 to 107 enclose the KH type-2 domain; that stretch reads IRKAIREKLK…EVRVNLVEIR (69 aa). The disordered stretch occupies residues 216–245; that stretch reads DKRLETSGQSRARANTNQRGPASGAQAAGA. A compositionally biased stretch (polar residues) spans 221-235; it reads TSGQSRARANTNQRG.

This sequence belongs to the universal ribosomal protein uS3 family. Part of the 30S ribosomal subunit. Forms a tight complex with proteins S10 and S14.

In terms of biological role, binds the lower part of the 30S subunit head. Binds mRNA in the 70S ribosome, positioning it for translation. The polypeptide is Small ribosomal subunit protein uS3 (Hyphomonas neptunium (strain ATCC 15444)).